We begin with the raw amino-acid sequence, 361 residues long: Phosphoserine aminotransferase (361 aa).

R43 is a binding site for L-glutamate. Residues 77–78 (AS), W103, T153, D173, and Q196 each bind pyridoxal 5'-phosphate. K197 is subject to N6-(pyridoxal phosphate)lysine. A pyridoxal 5'-phosphate-binding site is contributed by 238–239 (NT).

This sequence belongs to the class-V pyridoxal-phosphate-dependent aminotransferase family. SerC subfamily. Homodimer. Requires pyridoxal 5'-phosphate as cofactor.

The protein resides in the cytoplasm. It carries out the reaction O-phospho-L-serine + 2-oxoglutarate = 3-phosphooxypyruvate + L-glutamate. The catalysed reaction is 4-(phosphooxy)-L-threonine + 2-oxoglutarate = (R)-3-hydroxy-2-oxo-4-phosphooxybutanoate + L-glutamate. It functions in the pathway amino-acid biosynthesis; L-serine biosynthesis; L-serine from 3-phospho-D-glycerate: step 2/3. It participates in cofactor biosynthesis; pyridoxine 5'-phosphate biosynthesis; pyridoxine 5'-phosphate from D-erythrose 4-phosphate: step 3/5. Catalyzes the reversible conversion of 3-phosphohydroxypyruvate to phosphoserine and of 3-hydroxy-2-oxo-4-phosphonooxybutanoate to phosphohydroxythreonine. This chain is Phosphoserine aminotransferase, found in Pseudomonas aeruginosa (strain LESB58).